Consider the following 356-residue polypeptide: Serendipity locus protein beta (356 aa).

The segment at 171-193 adopts a C2H2-type 1; degenerate zinc-finger fold; sequence IPCHICGEMFSSQEVLERHIKAD. 5 C2H2-type zinc fingers span residues 201 to 223, 229 to 251, 257 to 279, 286 to 308, and 315 to 337; these read ATCN…MNLH, LECR…MEVH, YQCD…LMRH, LICE…LRTH, and YPCP…KRVH.

Binds chromatin; requires N-terminal regions to form protein-protein contacts, in addition to DNA specific recognition by the zinc fingers.

It is found in the nucleus. Its function is as follows. Binds to the consensus DNA sequence 5'-YCAGAGATGCGCA-3'. This is Serendipity locus protein beta (Sry-beta) from Drosophila melanogaster (Fruit fly).